Reading from the N-terminus, the 460-residue chain is Bifunctional protein GlmU (460 aa).

Positions M1–R232 are pyrophosphorylase. UDP-N-acetyl-alpha-D-glucosamine contacts are provided by residues L8–G11, K22, Q73, G78–T79, Y100–D102, G137, E157, N172, and N230. D102 is a Mg(2+) binding site. N230 provides a ligand contact to Mg(2+). Positions V233–A253 are linker. An N-acetyltransferase region spans residues G254 to K460. Residues R336 and K354 each contribute to the UDP-N-acetyl-alpha-D-glucosamine site. H366 (proton acceptor) is an active-site residue. Positions 369 and 380 each coordinate UDP-N-acetyl-alpha-D-glucosamine. Residues A383, N389–Y390, S408, A426, and R443 contribute to the acetyl-CoA site.

The protein in the N-terminal section; belongs to the N-acetylglucosamine-1-phosphate uridyltransferase family. It in the C-terminal section; belongs to the transferase hexapeptide repeat family. Homotrimer. It depends on Mg(2+) as a cofactor.

The protein localises to the cytoplasm. The enzyme catalyses alpha-D-glucosamine 1-phosphate + acetyl-CoA = N-acetyl-alpha-D-glucosamine 1-phosphate + CoA + H(+). It carries out the reaction N-acetyl-alpha-D-glucosamine 1-phosphate + UTP + H(+) = UDP-N-acetyl-alpha-D-glucosamine + diphosphate. Its pathway is nucleotide-sugar biosynthesis; UDP-N-acetyl-alpha-D-glucosamine biosynthesis; N-acetyl-alpha-D-glucosamine 1-phosphate from alpha-D-glucosamine 6-phosphate (route II): step 2/2. It functions in the pathway nucleotide-sugar biosynthesis; UDP-N-acetyl-alpha-D-glucosamine biosynthesis; UDP-N-acetyl-alpha-D-glucosamine from N-acetyl-alpha-D-glucosamine 1-phosphate: step 1/1. The protein operates within bacterial outer membrane biogenesis; LPS lipid A biosynthesis. Catalyzes the last two sequential reactions in the de novo biosynthetic pathway for UDP-N-acetylglucosamine (UDP-GlcNAc). The C-terminal domain catalyzes the transfer of acetyl group from acetyl coenzyme A to glucosamine-1-phosphate (GlcN-1-P) to produce N-acetylglucosamine-1-phosphate (GlcNAc-1-P), which is converted into UDP-GlcNAc by the transfer of uridine 5-monophosphate (from uridine 5-triphosphate), a reaction catalyzed by the N-terminal domain. This Shewanella baltica (strain OS195) protein is Bifunctional protein GlmU.